The chain runs to 452 residues: Chloride/fluoride channel protein (452 aa).

The next 10 membrane-spanning stretches (helical) occupy residues 23-43 (WLAL…LFLL), 57-77 (WVIW…HLIG), 97-117 (IVPL…HLFG), 160-180 (FASV…VLAI), 188-208 (LFPC…WGVV), 222-242 (LWSV…GLLF), 264-284 (PFAG…NHYI), 315-337 (VFTV…FYIG), 344-364 (LAPL…VAVF), and 386-408 (IAPL…GIYH).

The protein belongs to the chloride channel (TC 2.A.49) family.

It is found in the cell membrane. Functionally, transports chloride and fluoride with similar efficiency. The polypeptide is Chloride/fluoride channel protein (eriC) (Pseudomonas syringae pv. tomato (strain ATCC BAA-871 / DC3000)).